The primary structure comprises 157 residues: Probable cyclic pyranopterin monophosphate synthase (157 aa).

Substrate is bound by residues 75–77 (MCH) and 111–112 (ME). The active site involves D126.

It belongs to the MoaC family. In terms of assembly, homohexamer; trimer of dimers.

It catalyses the reaction (8S)-3',8-cyclo-7,8-dihydroguanosine 5'-triphosphate = cyclic pyranopterin phosphate + diphosphate. The protein operates within cofactor biosynthesis; molybdopterin biosynthesis. Functionally, catalyzes the conversion of (8S)-3',8-cyclo-7,8-dihydroguanosine 5'-triphosphate to cyclic pyranopterin monophosphate (cPMP). The sequence is that of Probable cyclic pyranopterin monophosphate synthase from Methanosarcina mazei (strain ATCC BAA-159 / DSM 3647 / Goe1 / Go1 / JCM 11833 / OCM 88) (Methanosarcina frisia).